A 324-amino-acid chain; its full sequence is DNA repair and recombination protein RadA (324 aa).

114 to 121 (GEFGSGKT) provides a ligand contact to ATP.

Belongs to the eukaryotic RecA-like protein family.

Functionally, involved in DNA repair and in homologous recombination. Binds and assemble on single-stranded DNA to form a nucleoprotein filament. Hydrolyzes ATP in a ssDNA-dependent manner and promotes DNA strand exchange between homologous DNA molecules. The polypeptide is DNA repair and recombination protein RadA (Sulfurisphaera tokodaii (strain DSM 16993 / JCM 10545 / NBRC 100140 / 7) (Sulfolobus tokodaii)).